We begin with the raw amino-acid sequence, 721 residues long: Polyribonucleotide nucleotidyltransferase (721 aa).

Mg(2+) is bound by residues Asp495 and Asp501. The 60-residue stretch at 562 to 621 (PRLLSFRIDPELIGTVIGPGGRTIKGITERTNTKIDIEDGGIVTIASHDGAAAEEAQKII) folds into the KH domain. In terms of domain architecture, S1 motif spans 631–699 (GEIFTGVVTR…SRGRINLTLR (69 aa)). Residues 702 to 721 (SQNSGMSYPEPTPTPVAPLN) form a disordered region. Over residues 711–721 (EPTPTPVAPLN) the composition is skewed to pro residues.

The protein belongs to the polyribonucleotide nucleotidyltransferase family. It depends on Mg(2+) as a cofactor.

Its subcellular location is the cytoplasm. It catalyses the reaction RNA(n+1) + phosphate = RNA(n) + a ribonucleoside 5'-diphosphate. Involved in mRNA degradation. Catalyzes the phosphorolysis of single-stranded polyribonucleotides processively in the 3'- to 5'-direction. The sequence is that of Polyribonucleotide nucleotidyltransferase from Prochlorococcus marinus (strain MIT 9312).